Consider the following 171-residue polypeptide: uncharacterized protein (171 aa).

Disordered stretches follow at residues 1 to 50 and 71 to 91; these read MSHR…THLS and RIDK…PMMK.

This is an uncharacterized protein from Caenorhabditis elegans.